Reading from the N-terminus, the 190-residue chain is Frizzled-6 (190 aa).

The FZ domain maps to 1–20 (FGFAWPEELECSRLVNCDET). Over 1-89 (FGFAWPEELE…NYELDVAKSF (89 aa)) the chain is Extracellular. A helical membrane pass occupies residues 90–110 (IGIVSIFCLCATLFTFLTFLI). The Cytoplasmic segment spans residues 111-121 (DVKRFRYPERP). Residues 122–142 (IIYYSVCYSIVSLMYFIGFLL) traverse the membrane as a helical segment. The Extracellular segment spans residues 143–169 (GNRTACNKADDKLEIGETVVLGSQNKA). N144 carries N-linked (GlcNAc...) asparagine glycosylation. Residues 170–190 (CTVLFMVLYFFTMAGTIWWVI) form a helical membrane-spanning segment.

The protein belongs to the G-protein coupled receptor Fz/Smo family.

The protein resides in the membrane. It is found in the cell membrane. It localises to the cell surface. The protein localises to the apical cell membrane. Its subcellular location is the cytoplasmic vesicle membrane. In terms of biological role, receptor for Wnt proteins. Most of frizzled receptors are coupled to the beta-catenin canonical signaling pathway, which leads to the activation of disheveled proteins, inhibition of GSK-3 kinase, nuclear accumulation of beta-catenin and activation of Wnt target genes. A second signaling pathway involving PKC and calcium fluxes has been seen for some family members, but it is not yet clear if it represents a distinct pathway or if it can be integrated in the canonical pathway, as PKC seems to be required for Wnt-mediated inactivation of GSK-3 kinase. Both pathways seem to involve interactions with G-proteins. Activation by Wnt5A stimulates PKC activity via a G-protein-dependent mechanism. Involved in transduction and intercellular transmission of polarity information during tissue morphogenesis and/or in differentiated tissues. Together with FZD3, may be involved in the neural tube closure and plays a role in the regulation of the establishment of planar cell polarity (PCP), particularly in the orientation of asymmetric bundles of stereocilia on the apical faces of a subset of auditory and vestibular sensory cells located in the inner ear. In Gallus gallus (Chicken), this protein is Frizzled-6 (FZD6).